Reading from the N-terminus, the 164-residue chain is UPF0251 protein MM_1448 (164 aa).

Positions 91–100 are enriched in basic and acidic residues; the sequence is GDYRMPRGDR. Residues 91-123 are disordered; it reads GDYRMPRGDRTGPAGQGPAGGGRGRGQGKGRGG. The segment covering 104-115 has biased composition (gly residues); the sequence is AGQGPAGGGRGR.

The protein belongs to the UPF0251 family.

The chain is UPF0251 protein MM_1448 from Methanosarcina mazei (strain ATCC BAA-159 / DSM 3647 / Goe1 / Go1 / JCM 11833 / OCM 88) (Methanosarcina frisia).